Here is a 116-residue protein sequence, read N- to C-terminus: UPF0499 protein ATEG_06693 (116 aa).

Residues 1-18 (MKLTGLLSLALLTTLALA) form the signal peptide. Disulfide bonds link Cys-32/Cys-46, Cys-36/Cys-49, and Cys-42/Cys-54.

Belongs to the UPF0499 family.

It is found in the secreted. The protein is UPF0499 protein ATEG_06693 of Aspergillus terreus (strain NIH 2624 / FGSC A1156).